Consider the following 262-residue polypeptide: MDINASRALANVYDLPDDFFPKIDDLVRDAKDALEPYWKSDSIKKHVLIATHFVDLIEDFWQTTQGMHEIAESLRAVIPPTTAPVPTGYLIQHEEAEEIPLGDLFKHQEERIVSFQPDYPITARIHAHLKAYAKINEESLDRARRLLWWHYNCLLWGEANVTNYISRLRTWLSTPEKYRGRDAPTIEAITRPIQVAQGGRKTSSGTRKPRGLEPRRRKVKTTVVYGRRRSKSRERRAPSPQRAGSPLPRSSSSHHRSPSPRK.

The disordered stretch occupies residues 183-262 (APTIEAITRP…SHHRSPSPRK (80 aa)). The Bipartite nuclear localization signal motif lies at 215–233 (RRRKVKTTVVYGRRRSKSR). A compositionally biased stretch (basic residues) spans 215 to 234 (RRRKVKTTVVYGRRRSKSRE). Serine 232, serine 239, and serine 245 each carry phosphoserine; by host. Over residues 252–262 (SSHHRSPSPRK) the composition is skewed to basic residues. The interval 254 to 260 (HHRSPSP) is RNA binding.

This sequence belongs to the avihepadnavirus core antigen family. Homodimerizes, then multimerizes.

It is found in the virion. The protein resides in the host cytoplasm. Functionally, self assembles to form an icosahedral capsid. Most capsid appear to be large particles with an icosahedral symmetry of T=4 and consist of 240 copies of capsid protein, though a fraction forms smaller T=3 particles consisting of 180 capsid proteins. Entering capsid are transported along microtubules to the nucleus. Phosphorylation of the capsid is thought to induce exposure of nuclear localization signal in the C-terminal portion of the capsid protein that allows binding to the nuclear pore complex via the importin (karyopherin-) alpha and beta. Capsids are imported in intact form through the nuclear pore into the nuclear basket, where it probably binds NUP153. Only capsids that contain the mature viral genome can release the viral DNA and capsid protein into the nucleoplasm. Immature capsids get stucked in the basket. Capsids encapsulate the pre-genomic RNA and the P protein. Pre-genomic RNA is reverse transcribed into DNA while the capsid is still in the cytoplasm. The capsid can then either be directed to the nucleus, providing more genome for transcription, or bud through the endoplasmic reticulum to provide new virions. The protein is Capsid protein (C) of Duck hepatitis B virus (strain China) (DHBV).